A 323-amino-acid polypeptide reads, in one-letter code: Leucine-rich repeat-containing protein 46 (323 aa).

LRR repeat units follow at residues 49–70 (DLET…ERLR), 71–92 (NIHS…ACIT), 93–114 (SLRF…LDLQ), and 115–135 (YLQF…DELP). Residues 146–188 (NPCTNQDGYRKMVIGALPLLLDLDKQPILERWTSDEEDKSSDE) enclose the LRRCT domain. Position 178 is a phosphothreonine (threonine 178). Phosphoserine is present on residues serine 179, serine 185, and serine 186. Positions 203-228 (RGFFKDLEQELHQHQERRQQAALTEH) form a coiled coil. A disordered region spans residues 252–323 (DCSPAVTEEP…TKSTNKRGTK (72 aa)). The span at 269-290 (ATSSTQMASSSKKQVPRNQKGS) shows a compositional bias: polar residues. The span at 297–310 (ALAATASKTSLAAA) shows a compositional bias: low complexity. At serine 303 the chain carries Phosphoserine.

The protein resides in the cell projection. The protein localises to the cilium. Its subcellular location is the flagellum. Required for normal spermatogenesis and male fertility. Plays an important role in sperm flagellum biogenesis. This chain is Leucine-rich repeat-containing protein 46 (Lrrc46), found in Rattus norvegicus (Rat).